The chain runs to 106 residues: Small ribosomal subunit protein uS17 (106 aa).

The protein belongs to the universal ribosomal protein uS17 family. As to quaternary structure, part of the 30S ribosomal subunit.

One of the primary rRNA binding proteins, it binds specifically to the 5'-end of 16S ribosomal RNA. In Methanosphaera stadtmanae (strain ATCC 43021 / DSM 3091 / JCM 11832 / MCB-3), this protein is Small ribosomal subunit protein uS17.